Consider the following 679-residue polypeptide: Cysteine-rich receptor-like protein kinase 29 (679 aa).

The signal sequence occupies residues 1-23; it reads MEHVRVIFFFACFLTLAPFHAFA. Residues 24–286 are Extracellular-facing; the sequence is QVDSYEFDPD…RTGKGKGGSK (263 aa). 2 consecutive Gnk2-homologous domains span residues 30 to 134 and 140 to 249; these read FDPD…NRTI and TNPT…TWRF. N41, N45, N71, N107, N131, and N187 each carry an N-linked (GlcNAc...) asparagine glycan. The segment at 260–281 is disordered; it reads PPAIQPADSPQSAARTERTGKG. The helical transmembrane segment at 287–307 threads the bilayer; it reads VIIAIVIPILLVALLAICLCL. The Cytoplasmic portion of the chain corresponds to 308 to 679; that stretch reads VLKWRKNKSG…DVTVSEFSPR (372 aa). Residues 357-637 enclose the Protein kinase domain; it reads FSSENELGRG…SLMLNSYSFT (281 aa). Residues 363–371 and K385 each bind ATP; that span reads LGRGGFGSV. Residue Y430 is modified to Phosphotyrosine. The active-site Proton acceptor is the D482. Residue S486 is modified to Phosphoserine. T524 bears the Phosphothreonine mark. The residue at position 532 (Y532) is a Phosphotyrosine. Residues 659 to 679 form a disordered region; the sequence is SSTEGLQMSSNDVTVSEFSPR.

It belongs to the protein kinase superfamily. Ser/Thr protein kinase family. CRK subfamily.

The protein localises to the membrane. It carries out the reaction L-seryl-[protein] + ATP = O-phospho-L-seryl-[protein] + ADP + H(+). The catalysed reaction is L-threonyl-[protein] + ATP = O-phospho-L-threonyl-[protein] + ADP + H(+). This is Cysteine-rich receptor-like protein kinase 29 (CRK29) from Arabidopsis thaliana (Mouse-ear cress).